Here is a 365-residue protein sequence, read N- to C-terminus: Dihydroorotate dehydrogenase (quinone) (365 aa).

FMN contacts are provided by residues 61-65 and serine 85; that span reads AGFDK. Lysine 65 is a substrate binding site. Position 110–114 (110–114) interacts with substrate; the sequence is NRMGF. 2 residues coordinate FMN: asparagine 139 and asparagine 170. Substrate is bound at residue asparagine 170. The Nucleophile role is filled by serine 173. Asparagine 175 is a binding site for substrate. Residues lysine 214 and serine 242 each contribute to the FMN site. A substrate-binding site is contributed by 243–244; sequence NT. FMN is bound by residues glycine 266, glycine 295, and 316–317; that span reads YS.

It belongs to the dihydroorotate dehydrogenase family. Type 2 subfamily. Monomer. FMN serves as cofactor.

Its subcellular location is the cell membrane. It catalyses the reaction (S)-dihydroorotate + a quinone = orotate + a quinol. It functions in the pathway pyrimidine metabolism; UMP biosynthesis via de novo pathway; orotate from (S)-dihydroorotate (quinone route): step 1/1. Functionally, catalyzes the conversion of dihydroorotate to orotate with quinone as electron acceptor. This Bradyrhizobium diazoefficiens (strain JCM 10833 / BCRC 13528 / IAM 13628 / NBRC 14792 / USDA 110) protein is Dihydroorotate dehydrogenase (quinone).